We begin with the raw amino-acid sequence, 171 residues long: Xanthine-guanine phosphoribosyltransferase (171 aa).

5-phospho-alpha-D-ribose 1-diphosphate-binding positions include R51–G52 and D106–T114. D107 lines the Mg(2+) pocket. Guanine is bound by residues D110 and I153. Xanthine-binding residues include D110 and I153. GMP contacts are provided by residues D110–T114 and W152–I153.

This sequence belongs to the purine/pyrimidine phosphoribosyltransferase family. XGPT subfamily. As to quaternary structure, homotetramer. Mg(2+) is required as a cofactor.

Its subcellular location is the cell inner membrane. The catalysed reaction is GMP + diphosphate = guanine + 5-phospho-alpha-D-ribose 1-diphosphate. The enzyme catalyses XMP + diphosphate = xanthine + 5-phospho-alpha-D-ribose 1-diphosphate. It catalyses the reaction IMP + diphosphate = hypoxanthine + 5-phospho-alpha-D-ribose 1-diphosphate. The protein operates within purine metabolism; GMP biosynthesis via salvage pathway; GMP from guanine: step 1/1. It functions in the pathway purine metabolism; XMP biosynthesis via salvage pathway; XMP from xanthine: step 1/1. Purine salvage pathway enzyme that catalyzes the transfer of the ribosyl-5-phosphate group from 5-phospho-alpha-D-ribose 1-diphosphate (PRPP) to the N9 position of the 6-oxopurines guanine and xanthine to form the corresponding ribonucleotides GMP (guanosine 5'-monophosphate) and XMP (xanthosine 5'-monophosphate), with the release of PPi. To a lesser extent, also acts on hypoxanthine. The protein is Xanthine-guanine phosphoribosyltransferase of Ruegeria pomeroyi (strain ATCC 700808 / DSM 15171 / DSS-3) (Silicibacter pomeroyi).